A 78-amino-acid chain; its full sequence is ATP synthase subunit c (78 aa).

The next 2 membrane-spanning stretches (helical) occupy residues 11–31 and 53–73; these read FIGA…VGHV and LFIG…VALL.

Belongs to the ATPase C chain family. As to quaternary structure, F-type ATPases have 2 components, F(1) - the catalytic core - and F(0) - the membrane proton channel. F(1) has five subunits: alpha(3), beta(3), gamma(1), delta(1), epsilon(1). F(0) has four main subunits: a(1), b(1), b'(1) and c(10-14). The alpha and beta chains form an alternating ring which encloses part of the gamma chain. F(1) is attached to F(0) by a central stalk formed by the gamma and epsilon chains, while a peripheral stalk is formed by the delta, b and b' chains.

The protein localises to the cell inner membrane. In terms of biological role, f(1)F(0) ATP synthase produces ATP from ADP in the presence of a proton or sodium gradient. F-type ATPases consist of two structural domains, F(1) containing the extramembraneous catalytic core and F(0) containing the membrane proton channel, linked together by a central stalk and a peripheral stalk. During catalysis, ATP synthesis in the catalytic domain of F(1) is coupled via a rotary mechanism of the central stalk subunits to proton translocation. Its function is as follows. Key component of the F(0) channel; it plays a direct role in translocation across the membrane. A homomeric c-ring of between 10-14 subunits forms the central stalk rotor element with the F(1) delta and epsilon subunits. The polypeptide is ATP synthase subunit c (Jannaschia sp. (strain CCS1)).